Reading from the N-terminus, the 246-residue chain is NAD-dependent protein deacetylase (246 aa).

Positions 1 to 246 constitute a Deacetylase sirtuin-type domain; it reads MKMKEFLDLL…RRVMEEGGIS (246 aa). NAD(+)-binding residues include alanine 22, threonine 26, phenylalanine 33, arginine 34, glutamine 98, isoleucine 100, aspartate 101, and histidine 116. Phenylalanine 33 serves as a coordination point for nicotinamide. Residues isoleucine 100 and aspartate 101 each contribute to the nicotinamide site. The active-site Proton acceptor is histidine 116. Zn(2+) is bound by residues cysteine 124, cysteine 127, cysteine 148, and cysteine 151. The NAD(+) site is built by serine 189, serine 190, asparagine 214, leucine 215, glycine 216, aspartate 231, and valine 232.

The protein belongs to the sirtuin family. Class U subfamily. Requires Zn(2+) as cofactor.

It is found in the cytoplasm. It carries out the reaction N(6)-acetyl-L-lysyl-[protein] + NAD(+) + H2O = 2''-O-acetyl-ADP-D-ribose + nicotinamide + L-lysyl-[protein]. Non-competitively inhibited by nicotinamide in vitro and in vivo, but not by nicotinic acid. Nicotinamide inhibits the deacetylation activity by reacting with a reaction intermediate. NAD-dependent protein deacetylase which modulates the activities of several enzymes which are inactive in their acetylated form. Also has depropionylation activity in vitro. Also able to ADP-ribosylate peptide substrates with Arg or Lys in the +2 position. The role of this function in vivo is not clear. The chain is NAD-dependent protein deacetylase from Thermotoga maritima (strain ATCC 43589 / DSM 3109 / JCM 10099 / NBRC 100826 / MSB8).